We begin with the raw amino-acid sequence, 457 residues long: tRNA modification GTPase MnmE (457 aa).

Residues arginine 22, glutamate 83, and arginine 122 each coordinate (6S)-5-formyl-5,6,7,8-tetrahydrofolate. The TrmE-type G domain occupies 219–378; that stretch reads GLATAIIGRP…LEEAIKALFF (160 aa). Asparagine 229 serves as a coordination point for K(+). Residues 229 to 234, 248 to 254, and 273 to 276 contribute to the GTP site; these read NVGKSS, TDIAGTT, and DTAG. Serine 233 is a Mg(2+) binding site. K(+) contacts are provided by threonine 248, isoleucine 250, and threonine 253. Threonine 254 contributes to the Mg(2+) binding site. Position 457 (lysine 457) interacts with (6S)-5-formyl-5,6,7,8-tetrahydrofolate.

Belongs to the TRAFAC class TrmE-Era-EngA-EngB-Septin-like GTPase superfamily. TrmE GTPase family. As to quaternary structure, homodimer. Heterotetramer of two MnmE and two MnmG subunits. K(+) serves as cofactor.

The protein resides in the cytoplasm. Its function is as follows. Exhibits a very high intrinsic GTPase hydrolysis rate. Involved in the addition of a carboxymethylaminomethyl (cmnm) group at the wobble position (U34) of certain tRNAs, forming tRNA-cmnm(5)s(2)U34. The chain is tRNA modification GTPase MnmE from Listeria innocua serovar 6a (strain ATCC BAA-680 / CLIP 11262).